A 300-amino-acid chain; its full sequence is MFKRIFLLTLTNIAVIFLLTLFISLLHLDRWLNAYGIDYQTLFLFSMVVGFTGSFISLAISKWMAKMAYNIHVIQEPSNEAERWLVETVAELAKRANIRMPEVGIYESPEVNAFATGPSRSNALVAVSTGILSQMNKKQIAGVLAHEITHINNGDMVTMTLLQGVVNTFVVFLSRIIGFFVDRLFSRNEERESIGIGFYLGMFISEIVLGLLASIIVAWYSRMREFRADAGGAHLAGKEAMISALKKLKQIMEGESAFIDERSPALNAFKINGRPGGILALLATHPPLDERIKALERIPD.

Helical transmembrane passes span I5–L25 and T41–S61. Zn(2+) is bound at residue H146. Residue E147 is part of the active site. H150 is a Zn(2+) binding site. The next 2 membrane-spanning stretches (helical) occupy residues L161–V181 and I196–I216. E225 lines the Zn(2+) pocket.

The protein belongs to the peptidase M48B family. Zn(2+) serves as cofactor.

The protein localises to the cell inner membrane. This Methylacidiphilum infernorum (isolate V4) (Methylokorus infernorum (strain V4)) protein is Protease HtpX homolog.